A 493-amino-acid chain; its full sequence is Glycylpeptide N-tetradecanoyltransferase (493 aa).

The interval 1-30 (MSDSKDSKGKAPQKPNDAEQTPGGKLTPQA) is disordered. Residues 82–85 (FKFW), 216–218 (LCI), and 224–228 (SKRLA) each bind tetradecanoyl-CoA. The active-site Proton acceptor; via carboxylate is the Leu-493.

Belongs to the NMT family. As to quaternary structure, monomer.

Its subcellular location is the cytoplasm. It catalyses the reaction N-terminal glycyl-[protein] + tetradecanoyl-CoA = N-tetradecanoylglycyl-[protein] + CoA + H(+). Adds a myristoyl group to the N-terminal glycine residue of certain cellular proteins. The chain is Glycylpeptide N-tetradecanoyltransferase (swoF) from Emericella nidulans (strain FGSC A4 / ATCC 38163 / CBS 112.46 / NRRL 194 / M139) (Aspergillus nidulans).